A 411-amino-acid polypeptide reads, in one-letter code: Bifunctional protein GlmU (411 aa).

Positions 1–204 (MDAIILCAGK…IGKLHGVELN (204 aa)) are pyrophosphorylase. UTP-binding positions include 6 to 9 (LCAG), glutamine 74, and glycine 79. N-acetyl-alpha-D-glucosamine 1-phosphate is bound by residues threonine 80, glycine 130, asparagine 142, and asparagine 158. A linker region spans residues 205–224 (GYWNDIGHPWDVLSANSHFL). The N-acetyltransferase stretch occupies residues 225-411 (NKIISKISGK…DELVITKKRN (187 aa)). Histidine 308 serves as the catalytic Proton acceptor. Alanine 384 and lysine 401 together coordinate acetyl-CoA.

In the N-terminal section; belongs to the N-acetylglucosamine-1-phosphate uridyltransferase family. The protein in the C-terminal section; belongs to the transferase hexapeptide repeat family.

The enzyme catalyses N-acetyl-alpha-D-glucosamine 1-phosphate + UTP + H(+) = UDP-N-acetyl-alpha-D-glucosamine + diphosphate. It carries out the reaction alpha-D-glucosamine 1-phosphate + acetyl-CoA = N-acetyl-alpha-D-glucosamine 1-phosphate + CoA + H(+). The protein operates within nucleotide-sugar biosynthesis; UDP-N-acetyl-alpha-D-glucosamine biosynthesis; N-acetyl-alpha-D-glucosamine 1-phosphate from alpha-D-glucosamine 6-phosphate (route II): step 2/2. It participates in nucleotide-sugar biosynthesis; UDP-N-acetyl-alpha-D-glucosamine biosynthesis; UDP-N-acetyl-alpha-D-glucosamine from N-acetyl-alpha-D-glucosamine 1-phosphate: step 1/1. Catalyzes the last two sequential reactions in the de novo biosynthetic pathway for UDP-N-acetyl-glucosamine (UDP-GlcNAc). Responsible for the acetylation of GlcN-1-P to GlcNAc-1-P, and for the uridyl transfer from UTP to GlcNAc-1-P, to produce UDP-GlcNAc and pyrophosphate. In Methanococcus maripaludis (strain C5 / ATCC BAA-1333), this protein is Bifunctional protein GlmU.